Consider the following 553-residue polypeptide: MEVSTTMMIVAIVAAYLLWFKSITKSMKGPKGPTMWPVVGSLPGLIENGNRMHEWIADNLRACSGTYQTCICAIPFLARKQLVTVTCDPKNLEHILKVRFDNYPKGPTWQAVFHDLLGEGIFNSDGDTWLFQRKTAALEFTTRTLRQAMGRWVNRAIKNRFCPILEMAQVQGKPVDLQDLLLRLTFDNICGLAFGKDPETLSPELPENNFATSFDRATEATLHRFIMPEFVWKLKKMLGLGLEVSLNNSLKQVDNYMTDVINTRKLELLNHQNGGPQHDDLLSRFMKKKESYSDKFLQHVALNFILAGRDTSSVALSWFFWLVSSNPRVEEKILVEICTILAETRGNDTSKWLEEPLVFEEVDQLMYLKAALSETLRLYPSVPEDSKHVISDDYLPDGTFVPAGSNITYSIYSTGRMKFIWGEDCLEFKPERWMSQDGDKFQVQDTFRFVAFNAGPRICLGKDLAYLQMKSIAAAVLLRHRLAVAPGHKVEQKMSLTLFMKDGLVMNVTPRDLTPILAKIEKFGKVESCAGEHHLINNGIHQPGSIAVNGIAA.

A helical membrane pass occupies residues 8–24 (MIVAIVAAYLLWFKSIT). Heme is bound at residue Cys459.

Belongs to the cytochrome P450 family. Heme serves as cofactor. In terms of tissue distribution, mostly expressed in the developing stigma of floral buds. Weakly detected in leaves, stems and flowers.

Its subcellular location is the membrane. It carries out the reaction (9Z)-octadecenoyl-CoA + reduced [NADPH--hemoprotein reductase] + O2 = (9Z)-18-hydroxyoctadecenoyl-CoA + oxidized [NADPH--hemoprotein reductase] + H2O + H(+). The enzyme catalyses (9Z,12Z)-octadecadienoyl-CoA + reduced [NADPH--hemoprotein reductase] + O2 = (9Z,12Z)-18-hydroxyoctadecadienoyl-CoA + oxidized [NADPH--hemoprotein reductase] + H2O + H(+). Fatty acyl-CoA omega-hydroxylase essential for the production of omega-hydroxy fatty acids and the biosynthesis of triacylglycerol-/diacylglycerol-based estolide polyesters in the stigma. Substrate preference is 16:0-CoA &gt; 18:1-CoA &gt; 18:0-CoA. The protein is Cytochrome P450 86A22 of Petunia hybrida (Petunia).